A 78-amino-acid chain; its full sequence is Dihydrofolate reductase type 2 (78 aa).

NADP(+)-binding positions include 32 to 36 and 66 to 69; these read KKSGA and VQIY. Isoleucine 68 serves as a coordination point for substrate.

As to quaternary structure, homotetramer.

It catalyses the reaction (6S)-5,6,7,8-tetrahydrofolate + NADP(+) = 7,8-dihydrofolate + NADPH + H(+). It participates in cofactor biosynthesis; tetrahydrofolate biosynthesis; 5,6,7,8-tetrahydrofolate from 7,8-dihydrofolate: step 1/1. Its function is as follows. Key enzyme in folate metabolism. Catalyzes an essential reaction for de novo glycine and purine synthesis, and for DNA precursor synthesis. This Escherichia coli protein is Dihydrofolate reductase type 2.